A 181-amino-acid chain; its full sequence is MSELTTIARPYAKAAFDFAVEQSATDKSAVEKWTEMLGFAAQVADNEQIRDFFANTFSVQKAADAMVSICGEQLDQYGQNLIRLMAENKRLTVLPAVFDEFQRYVEEHNATAEVQVISAQPLNATQEQKIAAAMEKRLARKVKLNCSVDNSLLAGVIIRTDDFVIDGSSRGQLNRLANELQ.

Belongs to the ATPase delta chain family. In terms of assembly, F-type ATPases have 2 components, F(1) - the catalytic core - and F(0) - the membrane proton channel. F(1) has five subunits: alpha(3), beta(3), gamma(1), delta(1), epsilon(1). F(0) has three main subunits: a(1), b(2) and c(10-14). The alpha and beta chains form an alternating ring which encloses part of the gamma chain. F(1) is attached to F(0) by a central stalk formed by the gamma and epsilon chains, while a peripheral stalk is formed by the delta and b chains.

Its subcellular location is the cell inner membrane. Functionally, f(1)F(0) ATP synthase produces ATP from ADP in the presence of a proton or sodium gradient. F-type ATPases consist of two structural domains, F(1) containing the extramembraneous catalytic core and F(0) containing the membrane proton channel, linked together by a central stalk and a peripheral stalk. During catalysis, ATP synthesis in the catalytic domain of F(1) is coupled via a rotary mechanism of the central stalk subunits to proton translocation. Its function is as follows. This protein is part of the stalk that links CF(0) to CF(1). It either transmits conformational changes from CF(0) to CF(1) or is implicated in proton conduction. The sequence is that of ATP synthase subunit delta from Mannheimia succiniciproducens (strain KCTC 0769BP / MBEL55E).